We begin with the raw amino-acid sequence, 1822 residues long: Integrin beta-4 (1822 aa).

The N-terminal stretch at 1–27 is a signal peptide; it reads MAGPRPSPWARLLLAALISVSLSGTLA. At 28–710 the chain is on the extracellular side; it reads NRCKKAPVKS…HKKKDCPPGS (683 aa). In terms of domain architecture, PSI spans 29-73; it reads RCKKAPVKSCTECVRVDKDCAYCTDEMFRDRRCNTQAELLAAGCQ. Intrachain disulfides connect Cys-30–Cys-48, Cys-38–Cys-455, Cys-41–Cys-61, Cys-51–Cys-72, Cys-245–Cys-288, Cys-457–Cys-476, Cys-468–Cys-479, and Cys-481–Cys-490. Positions 131–329 constitute a VWFA domain; sequence DLYILMDFSN…IPIFAVTNYS (199 aa). Mg(2+) is bound by residues Ser-139 and Ser-141. The Ca(2+) site is built by Ser-141, Asp-144, Asp-145, and Asp-176. The segment at 194–199 is involved in NRG1- and IGF1-binding; that stretch reads WPNSDP. Positions 228, 230, 232, and 233 each coordinate Ca(2+). Mg(2+) is bound at residue Glu-233. The N-linked (GlcNAc...) asparagine glycan is linked to Asn-327. Glu-350 is a binding site for Ca(2+). I-EGF domains lie at 457-491, 492-537, 538-574, and 575-615; these read CELQ…QTCN, CSTG…QFCE, YDNF…PSCD, and CPLS…TICE. The N-linked (GlcNAc...) asparagine glycan is linked to Asn-491. 11 disulfide bridges follow: Cys-492–Cys-520, Cys-503–Cys-518, Cys-512–Cys-523, Cys-525–Cys-536, Cys-543–Cys-557, Cys-551–Cys-562, Cys-564–Cys-573, Cys-575–Cys-598, Cys-582–Cys-596, Cys-590–Cys-601, and Cys-603–Cys-614. Asn-579 is a glycosylation site (N-linked (GlcNAc...) asparagine). Residue Asn-617 is glycosylated (N-linked (GlcNAc...) asparagine). 4 cysteine pairs are disulfide-bonded: Cys-626/Cys-671, Cys-632/Cys-651, Cys-635/Cys-648, and Cys-680/Cys-706. An N-linked (GlcNAc...) asparagine glycan is attached at Asn-695. A helical membrane pass occupies residues 711–733; the sequence is FWWLIPLLLLLLPLLALLLLLCW. The interval 732–749 is palmitoylated on several cysteines; that stretch reads CWKYCACCKACLALLPCC. At 734 to 1822 the chain is on the cytoplasmic side; that stretch reads KYCACCKACL…THMDQQFFQT (1089 aa). 3 positions are modified to phosphoserine: Ser-771, Ser-1069, and Ser-1119. Positions 979-1084 constitute a Calx-beta domain; the sequence is VNITIIKEQA…QVRRFHVQLS (106 aa). Residues 1113–1140 form a disordered region; that stretch reads TSQMLSSQPPPHGDLGAPQNPNAKAAGS. Fibronectin type-III domains lie at 1129 to 1218 and 1222 to 1321; these read APQN…THQE and EPGR…TQPK. The interval 1400 to 1444 is disordered; the sequence is LSASSGRSSDAEAPHGPPDDGGAGGKGGSLPRSATPGPPGEHLVN. Residues 1418-1427 show a composition bias toward gly residues; it reads DDGGAGGKGG. 3 positions are modified to phosphoserine: Ser-1454, Ser-1457, and Ser-1474. Thr-1487 bears the Phosphothreonine mark. Ser-1494 carries the phosphoserine modification. Positions 1495-1525 are disordered; the sequence is LTRSEHSHSTTLPRDYSTLTSVSSHDSRLTA. The segment covering 1503 to 1518 has biased composition (polar residues); the sequence is STTLPRDYSTLTSVSS. A Phosphothreonine modification is found at Thr-1530. 2 consecutive Fibronectin type-III domains span residues 1530–1625 and 1643–1739; these read TPTR…VHPQ and APGP…SQDG. Ser-1791 is subject to Phosphoserine.

Belongs to the integrin beta chain family. As to quaternary structure, heterodimer of an alpha and a beta subunit. Beta-4 associates with alpha-6. Interacts (via cytoplasmic region) with COL17A1 (via cytoplasmic region). Interacts (via cytoplasmic region) with DST isoform 3 (via N-terminus). Isoform beta-4a interacts (via cytoplasmic domain) with DST (via N-terminus). Interacts with RAC1. ITGA6:ITGB4 is found in a ternary complex with NRG1 and ERBB3. ITGA6:ITGB4 is found in a ternary complex with IGF1 and IGF1R. ITGA6:ITGB4 interacts with IGF2. Interacts with TMEM268; this interaction prevents ITGB4 degradation. Post-translationally, palmitoylated by DHHC3 at several cysteines of the membrane-proximal region, enhancing stability and cell surface expression. Palmitoylation also promotes secondary association with tertaspanins. As to expression, integrin alpha-6/beta-4 is predominantly expressed by epithelia. Isoform beta-4D is also expressed in colon and placenta. Isoform beta-4E is also expressed in epidermis, lung, duodenum, heart, spleen and stomach.

Its subcellular location is the cell membrane. It localises to the cell junction. The protein resides in the hemidesmosome. Its function is as follows. Integrin alpha-6/beta-4 is a receptor for laminin. Plays a critical structural role in the hemidesmosome of epithelial cells. Is required for the regulation of keratinocyte polarity and motility. ITGA6:ITGB4 binds to NRG1 (via EGF domain) and this binding is essential for NRG1-ERBB signaling. ITGA6:ITGB4 binds to IGF1 and this binding is essential for IGF1 signaling. ITGA6:ITGB4 binds to IGF2 and this binding is essential for IGF2 signaling. This Homo sapiens (Human) protein is Integrin beta-4 (ITGB4).